Consider the following 487-residue polypeptide: Bifunctional protein GlmU (487 aa).

Positions 1-240 (MAEVTNCAAI…PEELSGVNDR (240 aa)) are pyrophosphorylase. UDP-N-acetyl-alpha-D-glucosamine is bound by residues 12 to 15 (LAAG), K26, Q83, and 88 to 89 (GT). Residue D113 coordinates Mg(2+). UDP-N-acetyl-alpha-D-glucosamine is bound by residues G150, E165, N180, and N238. N238 is a binding site for Mg(2+). The segment at 241-261 (VQLAAAGRLLNRRMVEEAMRG) is linker. The interval 262 to 487 (GTTIVDPDTT…DAKANDQTTN (226 aa)) is N-acetyltransferase. R343 and K361 together coordinate UDP-N-acetyl-alpha-D-glucosamine. H373 functions as the Proton acceptor in the catalytic mechanism. Residues Y376 and N387 each contribute to the UDP-N-acetyl-alpha-D-glucosamine site. Acetyl-CoA is bound by residues A390, 396 to 397 (NY), S415, and A433. The interval 449-487 (SGGKQRNIEGWVQKKRPGTPAAEAAGKAQDAKANDQTTN) is disordered.

In the N-terminal section; belongs to the N-acetylglucosamine-1-phosphate uridyltransferase family. This sequence in the C-terminal section; belongs to the transferase hexapeptide repeat family. As to quaternary structure, homotrimer. It depends on Mg(2+) as a cofactor.

It localises to the cytoplasm. It catalyses the reaction alpha-D-glucosamine 1-phosphate + acetyl-CoA = N-acetyl-alpha-D-glucosamine 1-phosphate + CoA + H(+). It carries out the reaction N-acetyl-alpha-D-glucosamine 1-phosphate + UTP + H(+) = UDP-N-acetyl-alpha-D-glucosamine + diphosphate. It functions in the pathway nucleotide-sugar biosynthesis; UDP-N-acetyl-alpha-D-glucosamine biosynthesis; N-acetyl-alpha-D-glucosamine 1-phosphate from alpha-D-glucosamine 6-phosphate (route II): step 2/2. Its pathway is nucleotide-sugar biosynthesis; UDP-N-acetyl-alpha-D-glucosamine biosynthesis; UDP-N-acetyl-alpha-D-glucosamine from N-acetyl-alpha-D-glucosamine 1-phosphate: step 1/1. It participates in bacterial outer membrane biogenesis; LPS lipid A biosynthesis. Functionally, catalyzes the last two sequential reactions in the de novo biosynthetic pathway for UDP-N-acetylglucosamine (UDP-GlcNAc). The C-terminal domain catalyzes the transfer of acetyl group from acetyl coenzyme A to glucosamine-1-phosphate (GlcN-1-P) to produce N-acetylglucosamine-1-phosphate (GlcNAc-1-P), which is converted into UDP-GlcNAc by the transfer of uridine 5-monophosphate (from uridine 5-triphosphate), a reaction catalyzed by the N-terminal domain. The polypeptide is Bifunctional protein GlmU (Corynebacterium aurimucosum (strain ATCC 700975 / DSM 44827 / CIP 107346 / CN-1) (Corynebacterium nigricans)).